The sequence spans 346 residues: Phosphoribosylformylglycinamidine cyclo-ligase (346 aa).

Belongs to the AIR synthase family.

It localises to the cytoplasm. It carries out the reaction 2-formamido-N(1)-(5-O-phospho-beta-D-ribosyl)acetamidine + ATP = 5-amino-1-(5-phospho-beta-D-ribosyl)imidazole + ADP + phosphate + H(+). The protein operates within purine metabolism; IMP biosynthesis via de novo pathway; 5-amino-1-(5-phospho-D-ribosyl)imidazole from N(2)-formyl-N(1)-(5-phospho-D-ribosyl)glycinamide: step 2/2. The sequence is that of Phosphoribosylformylglycinamidine cyclo-ligase from Shewanella pealeana (strain ATCC 700345 / ANG-SQ1).